Reading from the N-terminus, the 301-residue chain is uncharacterized protein (301 aa).

The next 9 helical transmembrane spans lie at 1-21 (MSWI…LGIV), 33-53 (SVLF…YFYY), 72-92 (AMSL…KIPG), 101-121 (FGII…TILI), 124-144 (FAWL…KTFY), 185-205 (YFTP…VFAI), 220-240 (IIYT…FCLA), 246-266 (FSYI…KIFI), and 270-290 (IAIP…FGII).

It belongs to the TerC family.

The protein localises to the cell membrane. This is an uncharacterized protein from Rickettsia felis (strain ATCC VR-1525 / URRWXCal2) (Rickettsia azadi).